The sequence spans 382 residues: UDP-N-acetylglucosamine--N-acetylmuramyl-(pentapeptide) pyrophosphoryl-undecaprenol N-acetylglucosamine transferase (382 aa).

UDP-N-acetyl-alpha-D-glucosamine-binding positions include 11–13 (TGG), Asn124, Arg165, Ser200, Ile254, and Gln299.

It belongs to the glycosyltransferase 28 family. MurG subfamily.

It localises to the cell inner membrane. The catalysed reaction is di-trans,octa-cis-undecaprenyl diphospho-N-acetyl-alpha-D-muramoyl-L-alanyl-D-glutamyl-meso-2,6-diaminopimeloyl-D-alanyl-D-alanine + UDP-N-acetyl-alpha-D-glucosamine = di-trans,octa-cis-undecaprenyl diphospho-[N-acetyl-alpha-D-glucosaminyl-(1-&gt;4)]-N-acetyl-alpha-D-muramoyl-L-alanyl-D-glutamyl-meso-2,6-diaminopimeloyl-D-alanyl-D-alanine + UDP + H(+). It participates in cell wall biogenesis; peptidoglycan biosynthesis. In terms of biological role, cell wall formation. Catalyzes the transfer of a GlcNAc subunit on undecaprenyl-pyrophosphoryl-MurNAc-pentapeptide (lipid intermediate I) to form undecaprenyl-pyrophosphoryl-MurNAc-(pentapeptide)GlcNAc (lipid intermediate II). The polypeptide is UDP-N-acetylglucosamine--N-acetylmuramyl-(pentapeptide) pyrophosphoryl-undecaprenol N-acetylglucosamine transferase (Nitratidesulfovibrio vulgaris (strain DSM 19637 / Miyazaki F) (Desulfovibrio vulgaris)).